A 646-amino-acid polypeptide reads, in one-letter code: Mitochondrial distribution and morphology protein 10 (646 aa).

Disordered regions lie at residues 206–230 (KSTS…SLSN) and 315–347 (ETSS…GGGL). A compositionally biased stretch (low complexity) spans 207-230 (STSSSMDRLDSSNPSLSSSTSLSN). The segment covering 315–333 (ETSSSASYPQRNGSVLHTG) has biased composition (polar residues).

This sequence belongs to the MDM10 family. Component of the ER-mitochondria encounter structure (ERMES) or MDM complex, composed of MMM1, MDM10, MDM12 and MDM34. Associates with the mitochondrial outer membrane sorting assembly machinery SAM(core) complex.

It is found in the mitochondrion outer membrane. Its function is as follows. Component of the ERMES/MDM complex, which serves as a molecular tether to connect the endoplasmic reticulum and mitochondria. Components of this complex are involved in the control of mitochondrial shape and protein biogenesis and may function in phospholipid exchange. MDM10 is involved in the late assembly steps of the general translocase of the mitochondrial outer membrane (TOM complex). Functions in the TOM40-specific route of the assembly of outer membrane beta-barrel proteins, including the association of TOM40 with the receptor TOM22 and small TOM proteins. Can associate with the SAM(core) complex as well as the MDM12-MMM1 complex, both involved in late steps of the major beta-barrel assembly pathway, that is responsible for biogenesis of all outer membrane beta-barrel proteins. May act as a switch that shuttles between both complexes and channels precursor proteins into the TOM40-specific pathway. Plays a role in mitochondrial morphology and in the inheritance of mitochondria. In Mycosarcoma maydis (Corn smut fungus), this protein is Mitochondrial distribution and morphology protein 10.